Here is a 289-residue protein sequence, read N- to C-terminus: Proteasome subunit beta (289 aa).

Residues 1–59 constitute a propeptide, removed in mature form; by autocatalysis; the sequence is MEHTPRNAGFALPAAYMSTMTSSFIDFLKAEAPDLLPRARVENMPAVPGGGSAFEPPHG. Residue Thr-60 is the Nucleophile of the active site.

Belongs to the peptidase T1B family. The 20S proteasome core is composed of 14 alpha and 14 beta subunits that assemble into four stacked heptameric rings, resulting in a barrel-shaped structure. The two inner rings, each composed of seven catalytic beta subunits, are sandwiched by two outer rings, each composed of seven alpha subunits. The catalytic chamber with the active sites is on the inside of the barrel. Has a gated structure, the ends of the cylinder being occluded by the N-termini of the alpha-subunits. Is capped by the proteasome-associated ATPase, ARC.

It localises to the cytoplasm. The catalysed reaction is Cleavage of peptide bonds with very broad specificity.. It participates in protein degradation; proteasomal Pup-dependent pathway. With respect to regulation, the formation of the proteasomal ATPase ARC-20S proteasome complex, likely via the docking of the C-termini of ARC into the intersubunit pockets in the alpha-rings, may trigger opening of the gate for substrate entry. Interconversion between the open-gate and close-gate conformations leads to a dynamic regulation of the 20S proteasome proteolysis activity. Its function is as follows. Component of the proteasome core, a large protease complex with broad specificity involved in protein degradation. The sequence is that of Proteasome subunit beta from Saccharomonospora viridis (strain ATCC 15386 / DSM 43017 / JCM 3036 / CCUG 5913 / NBRC 12207 / NCIMB 9602 / P101) (Thermoactinomyces viridis).